The sequence spans 379 residues: tRNA-specific 2-thiouridylase MnmA (379 aa).

ATP contacts are provided by residues alanine 6 to serine 13 and leucine 32. The Nucleophile role is filled by cysteine 101. A disulfide bond links cysteine 101 and cysteine 199. Glycine 125 contributes to the ATP binding site. The interaction with tRNA stretch occupies residues lysine 148–glutamine 150. The Cysteine persulfide intermediate role is filled by cysteine 199.

Belongs to the MnmA/TRMU family.

The protein localises to the cytoplasm. It carries out the reaction S-sulfanyl-L-cysteinyl-[protein] + uridine(34) in tRNA + AH2 + ATP = 2-thiouridine(34) in tRNA + L-cysteinyl-[protein] + A + AMP + diphosphate + H(+). In terms of biological role, catalyzes the 2-thiolation of uridine at the wobble position (U34) of tRNA, leading to the formation of s(2)U34. This is tRNA-specific 2-thiouridylase MnmA from Arthrobacter sp. (strain FB24).